We begin with the raw amino-acid sequence, 418 residues long: F-box protein At1g10780 (418 aa).

One can recognise an F-box domain in the interval 1 to 47; it reads MDSLPDAILQYILSYLTSARDVAACNCVSKRWKESTDSVKSVVFHRN.

In Arabidopsis thaliana (Mouse-ear cress), this protein is F-box protein At1g10780.